Reading from the N-terminus, the 692-residue chain is Chaperone protein dnaK1 (692 aa).

Phosphothreonine; by autocatalysis is present on Thr-197.

It belongs to the heat shock protein 70 family.

Acts as a chaperone. This is Chaperone protein dnaK1 (dnaK1) from Synechocystis sp. (strain ATCC 27184 / PCC 6803 / Kazusa).